The following is a 1958-amino-acid chain: Callose synthase 7 (1958 aa).

The disordered stretch occupies residues 1–29 (MASTSSGGRGEDGRPPQMQPVRSMSRKMT). Residues 1–504 (MASTSSGGRG…LYRSFDRMWM (504 aa)) lie on the Cytoplasmic side of the membrane. The helical transmembrane segment at 505 to 525 (FLVLSLQTMIIVAWHPSGSIL) threads the bilayer. The Extracellular segment spans residues 526-535 (AIFTEDVFRN). The chain crosses the membrane as a helical span at residues 536–556 (VLTIFITSAFLNLLQATLDLV). Topologically, residues 557–569 (LSFGAWKSLKFSQ) are cytoplasmic. Residues 570-590 (IMRYITKFLMAAMWAIMLPIT) form a helical membrane-spanning segment. Residues 591 to 620 (YSKSVQNPTGLIKFFSSWVGSWLHRSLYDY) lie on the Extracellular side of the membrane. A helical membrane pass occupies residues 621–641 (AIALYVLPNILAAVFFLLPPL). The Cytoplasmic segment spans residues 642 to 673 (RRIMERSNMRIVTLIMWWAQPKLYIGRGMHEE). A helical transmembrane segment spans residues 674–694 (MFALFKYTFFWVMLLLSKLAF). The Extracellular portion of the chain corresponds to 695–730 (SYYVEILPLVNPTKLIWDMHVVNYEWHEFFPNATHN). A helical membrane pass occupies residues 731 to 751 (IGVIIAIWGPIVLVYFMDTQI). Residues 752 to 1496 (WYAIFSTLFG…FDFYRMLSFY (745 aa)) lie on the Cytoplasmic side of the membrane. Residues 1497 to 1517 (FTTVGFYFSSMITVLTVYVFL) traverse the membrane as a helical segment. The Extracellular portion of the chain corresponds to 1518-1547 (YGRLYLVLSGLEKNILQSASVHESNALEQA). A helical transmembrane segment spans residues 1548–1568 (LAAQSVFQLGFLMVLPMVMEI). Topologically, residues 1569-1576 (GLEKGFRT) are cytoplasmic. Residues 1577–1597 (ALGDFIIMQLQLASVFFTFQL) form a helical membrane-spanning segment. Residues 1598–1640 (GTKAHYFGRTILHGGSKYRATGRGFVVFHAKFAENYRLYSRSH) lie on the Extracellular side of the membrane. The chain crosses the membrane as a helical span at residues 1641 to 1661 (FVKGLELVILLVVYQVYGTSY). Residues 1662 to 1667 (RSSSTY) lie on the Cytoplasmic side of the membrane. The chain crosses the membrane as a helical span at residues 1668 to 1688 (MYITFSMWFLVTSWLFAPFIF). Topologically, residues 1689-1742 (NPSGFEWQKTVDDWTDWKRWMGNRGGIGIVLDKSWESWWDIEQEHLKHTNLRGR) are extracellular. The chain crosses the membrane as a helical span at residues 1743–1763 (VLEILLALRFLLYQYGIVYHL). Over 1764-1771 (NIARRHTT) the chain is Cytoplasmic. Residues 1772-1792 (FLVYGLSWAILLSVLLVLKMV) form a helical membrane-spanning segment. At 1793–1812 (SMGRRKFGTDFQVMFRILKA) the chain is on the extracellular side. The helical transmembrane segment at 1813–1833 (LLFLGFLSVMTVLFVVCGLTI) threads the bilayer. The Cytoplasmic portion of the chain corresponds to 1834-1835 (SD). A helical membrane pass occupies residues 1836–1856 (LFASILAFLPTGWAILLIGQA). Residues 1857–1878 (LRSVFKGLGFWDSVKELGRAYE) lie on the Extracellular side of the membrane. The chain crosses the membrane as a helical span at residues 1879–1899 (YIMGLVIFTPIAVLSWFPFVS). Over 1900–1958 (EFQTRLLFNQAFSRGLQISMILAGKKDKETPSTKYLGHTEESFGLEHDTNTFNHYYLWT) the chain is Cytoplasmic.

It belongs to the glycosyltransferase 48 family.

The protein resides in the cell membrane. The catalysed reaction is [(1-&gt;3)-beta-D-glucosyl](n) + UDP-alpha-D-glucose = [(1-&gt;3)-beta-D-glucosyl](n+1) + UDP + H(+). Functionally, involved in callose synthesis at the forming cell plate during cytokinesis. During plant growth and development, callose is found as a transitory component of the cell plate in dividing cells, is a major component of pollen mother cell walls and pollen tubes, and is found as a structural component of plasmodesmatal canals. This is Callose synthase 7 (CALS7) from Arabidopsis thaliana (Mouse-ear cress).